A 315-amino-acid chain; its full sequence is Acetyl-coenzyme A carboxylase carboxyl transferase subunit alpha (315 aa).

In terms of domain architecture, CoA carboxyltransferase C-terminal spans 38-292 (RLQKKSNELT…KLRLKEDLAE (255 aa)).

Belongs to the AccA family. As to quaternary structure, acetyl-CoA carboxylase is a heterohexamer composed of biotin carboxyl carrier protein (AccB), biotin carboxylase (AccC) and two subunits each of ACCase subunit alpha (AccA) and ACCase subunit beta (AccD).

It localises to the cytoplasm. The enzyme catalyses N(6)-carboxybiotinyl-L-lysyl-[protein] + acetyl-CoA = N(6)-biotinyl-L-lysyl-[protein] + malonyl-CoA. It participates in lipid metabolism; malonyl-CoA biosynthesis; malonyl-CoA from acetyl-CoA: step 1/1. In terms of biological role, component of the acetyl coenzyme A carboxylase (ACC) complex. First, biotin carboxylase catalyzes the carboxylation of biotin on its carrier protein (BCCP) and then the CO(2) group is transferred by the carboxyltransferase to acetyl-CoA to form malonyl-CoA. This Haemophilus influenzae (strain 86-028NP) protein is Acetyl-coenzyme A carboxylase carboxyl transferase subunit alpha.